Here is a 95-residue protein sequence, read N- to C-terminus: Gas vesicle protein S (95 aa).

It belongs to the gas vesicle GvpA family.

The protein localises to the gas vesicle. Its function is as follows. Probably a minor component of the gas vesicle. It is not clear what function gas vesicles perform in soil bacteria. In terms of biological role, when a minimal gvp locus (gvpA2-gvpR-gvpN-gvpF-gvpG-gvpL-gvpS-gvpK-gvpJ-gvpT-gvpU, called pNL29) is expressed in E.coli gas vesicles are made. This Priestia megaterium (Bacillus megaterium) protein is Gas vesicle protein S.